Here is a 651-residue protein sequence, read N- to C-terminus: Probable potassium transport system protein Kup (651 aa).

Transmembrane regions (helical) follow at residues 41–61, 82–102, 130–150, 163–183, 194–214, 235–255, 276–296, 309–329, 366–386, 395–415, 426–446, and 450–470; these read LVLG…IYAF, VVSL…VLFV, LILG…VITP, IVAP…LVTL, VAIV…ASGL, FLTV…LAMT, WLWI…AFIL, MIPS…TVIA, IYIP…VLGF, AYGI…YIAM, ALPI…ANII, and EGGW…WTWV.

This sequence belongs to the HAK/KUP transporter (TC 2.A.72) family.

It localises to the cell inner membrane. It catalyses the reaction K(+)(in) + H(+)(in) = K(+)(out) + H(+)(out). In terms of biological role, transport of potassium into the cell. Likely operates as a K(+):H(+) symporter. This Brucella abortus (strain S19) protein is Probable potassium transport system protein Kup.